The chain runs to 229 residues: Large ribosomal subunit protein uL1 (229 aa).

This sequence belongs to the universal ribosomal protein uL1 family. In terms of assembly, part of the 50S ribosomal subunit.

Functionally, binds directly to 23S rRNA. The L1 stalk is quite mobile in the ribosome, and is involved in E site tRNA release. Protein L1 is also a translational repressor protein, it controls the translation of the L11 operon by binding to its mRNA. In Lacticaseibacillus casei (strain BL23) (Lactobacillus casei), this protein is Large ribosomal subunit protein uL1.